The chain runs to 724 residues: Catalase-peroxidase (724 aa).

The segment at 1–20 is disordered; the sequence is MDENKTKPAGKCPVMHGGNT. A cross-link (tryptophyl-tyrosyl-methioninium (Trp-Tyr) (with M-251)) is located at residues 98–225; it reads WHSAGTYRTA…LAAVQMGLIY (128 aa). The active-site Proton acceptor is the His99. Residues 225-251 constitute a cross-link (tryptophyl-tyrosyl-methioninium (Tyr-Met) (with W-98)); it reads YVNPEGVDGNPDPLRTAQDMRVTFSRM. His266 lines the heme b pocket.

It belongs to the peroxidase family. Peroxidase/catalase subfamily. Homodimer or homotetramer. The cofactor is heme b. In terms of processing, formation of the three residue Trp-Tyr-Met cross-link is important for the catalase, but not the peroxidase activity of the enzyme.

The catalysed reaction is H2O2 + AH2 = A + 2 H2O. The enzyme catalyses 2 H2O2 = O2 + 2 H2O. Functionally, bifunctional enzyme with both catalase and broad-spectrum peroxidase activity. The polypeptide is Catalase-peroxidase (Pectobacterium carotovorum subsp. carotovorum (strain PC1)).